Here is a 294-residue protein sequence, read N- to C-terminus: Survival motor neuron protein (294 aa).

Positions methionine 1–valine 12 are enriched in gly residues. A disordered region spans residues methionine 1 to aspartate 32. Alanine 2 carries the post-translational modification N-acetylalanine. Residues serine 4, serine 5, and serine 8 each carry the phosphoserine; by PKA modification. A Phosphothreonine modification is found at threonine 25. Positions glycine 26–lysine 51 are interacts with GEMIN2. Residues serine 28 and serine 31 each carry the phosphoserine modification. A Glycyl lysine isopeptide (Lys-Gly) (interchain with G-Cter in SUMO2) cross-link involves residue lysine 51. The interval isoleucine 59–serine 88 is disordered. Positions threonine 68–lysine 82 are enriched in basic residues. Threonine 69 is subject to Phosphothreonine. Threonine 85 bears the Phosphothreonine; by PKA mark. In terms of domain architecture, Tudor spans glutamine 91–asparagine 151. The segment at lysine 97–lysine 209 is required for interaction with RPP20/POP7. Residues alanine 156 to serine 166 show a composition bias toward low complexity. Residues alanine 156–proline 222 form a disordered region. Phosphoserine; by PKA is present on serine 187. The segment covering leucine 194 to arginine 204 has biased composition (pro residues). The span at glycine 206–asparagine 215 shows a compositional bias: low complexity. Lysine 209 is covalently cross-linked (Glycyl lysine isopeptide (Lys-Gly) (interchain with G-Cter in SUMO2)). Residues proline 240 to tryptophan 267 are P2 (binding site for SNRPB). Residues aspartate 252–phenylalanine 280 form an involved in homooligomerization region. Residues glycine 279–asparagine 294 are required for interaction with SYNCRIP.

The protein belongs to the SMN family. As to quaternary structure, homooligomer; may form higher order homooligomers in the dimer to octamer range. Part of the core SMN complex that contains SMN1, GEMIN2/SIP1, DDX20/GEMIN3, GEMIN4, GEMIN5, GEMIN6, GEMIN7, GEMIN8 and STRAP/UNRIP. Part of the SMN-Sm complex that contains SMN1, GEMIN2/SIP1, DDX20/GEMIN3, GEMIN4, GEMIN5, GEMIN6, GEMIN7, GEMIN8, STRAP/UNRIP and the Sm proteins SNRPB, SNRPD1, SNRPD2, SNRPD3, SNRPE, SNRPF and SNRPG. Component of an import snRNP complex composed of KPNB1, RNUT1, SMN1 and ZNF259. Interacts with DDX20, FBL, NOLA1, RNUT1, SYNCRIP and with several spliceosomal snRNP core Sm proteins, including SNRPB, SNRPD1, SNRPD2, SNRPD3, SNRPE and ILF3. Interacts with GEMIN2; the interaction is direct. Interacts with GEMIN3; the interaction is direct. Interacts with GEMIN8; the interaction is direct. Interacts with SNRPB; the interaction is direct. Interacts (via Tudor domain) with SNRPD1 (via C-terminus); the interaction is direct. Interacts with SNRPD2; the interaction is direct. Interacts (via Tudor domain) with SNRPD3 (via C-terminus); the interaction is direct. Interacts with SNRPE; the interaction is direct. Interacts with OSTF1, LSM10, LSM11 and RPP20/POP7. Interacts (via C-terminal region) with ZPR1 (via C-terminal region). Interacts (via Tudor domain) with COIL. Interacts with SETX; recruits SETX to POLR2A. Interacts with POLR2A (via the C-terminal domain (CTD)). Interacts with PRMT5. Interacts with XRN2. Interacts (via C-terminus) with FMR1 (via C-terminus); the interaction is direct and occurs in a RNA-independent manner. Interacts (via Tudor domain) with SF3B2 ('Arg-508'-methylated form). Interacts with WRAP53/TCAB1. Interacts (via Tudor domain) with ELAVL4 in an RNA-independent manner; the interaction is required for localization of ELAVL4 to RNA granules. Interacts with FRG1. In terms of assembly, does not homooligomerize. Does not interact with SNRPB. In terms of tissue distribution, expressed in a wide variety of tissues. Expressed at high levels in brain, kidney and liver, moderate levels in skeletal and cardiac muscle, and low levels in fibroblasts and lymphocytes. Also seen at high levels in spinal cord. Present in osteoclasts and mononuclear cells (at protein level).

It is found in the nucleus. Its subcellular location is the gem. It localises to the cajal body. The protein resides in the cytoplasm. The protein localises to the cytoplasmic granule. It is found in the perikaryon. Its subcellular location is the cell projection. It localises to the neuron projection. The protein resides in the axon. The protein localises to the myofibril. It is found in the sarcomere. Its subcellular location is the z line. The SMN complex catalyzes the assembly of small nuclear ribonucleoproteins (snRNPs), the building blocks of the spliceosome, and thereby plays an important role in the splicing of cellular pre-mRNAs. Most spliceosomal snRNPs contain a common set of Sm proteins SNRPB, SNRPD1, SNRPD2, SNRPD3, SNRPE, SNRPF and SNRPG that assemble in a heptameric protein ring on the Sm site of the small nuclear RNA to form the core snRNP (Sm core). In the cytosol, the Sm proteins SNRPD1, SNRPD2, SNRPE, SNRPF and SNRPG are trapped in an inactive 6S pICln-Sm complex by the chaperone CLNS1A that controls the assembly of the core snRNP. To assemble core snRNPs, the SMN complex accepts the trapped 5Sm proteins from CLNS1A forming an intermediate. Within the SMN complex, SMN1 acts as a structural backbone and together with GEMIN2 it gathers the Sm complex subunits. Binding of snRNA inside 5Sm ultimately triggers eviction of the SMN complex, thereby allowing binding of SNRPD3 and SNRPB to complete assembly of the core snRNP. Ensures the correct splicing of U12 intron-containing genes that may be important for normal motor and proprioceptive neurons development. Also required for resolving RNA-DNA hybrids created by RNA polymerase II, that form R-loop in transcription terminal regions, an important step in proper transcription termination. May also play a role in the metabolism of small nucleolar ribonucleoprotein (snoRNPs). In Homo sapiens (Human), this protein is Survival motor neuron protein (SMN1).